A 201-amino-acid polypeptide reads, in one-letter code: MYAYIKGKLSQLFPTHVVVETNGVGYEIQTPNSYRFQQYYQQEVTIYTSLVVREDAQLLYGFMSEEEKGMFLSLNKVTGIGPKSALAILAASTPNEVKIGIENENETYLTKFPGIGKKTARQIILDLKGKVQITEENPETLLNFEGSESNQTSPILDEALLALEALGYSKRELNKVEKKLQAESYTSVDEAVKAGLKILVS.

Residues 1–63 form a domain I region; that stretch reads MYAYIKGKLS…EDAQLLYGFM (63 aa). Positions 64-142 are domain II; the sequence is SEEEKGMFLS…ITEENPETLL (79 aa). Residues 143–153 are flexible linker; it reads NFEGSESNQTS. The segment at 153-201 is domain III; it reads SPILDEALLALEALGYSKRELNKVEKKLQAESYTSVDEAVKAGLKILVS.

The protein belongs to the RuvA family. Homotetramer. Forms an RuvA(8)-RuvB(12)-Holliday junction (HJ) complex. HJ DNA is sandwiched between 2 RuvA tetramers; dsDNA enters through RuvA and exits via RuvB. An RuvB hexamer assembles on each DNA strand where it exits the tetramer. Each RuvB hexamer is contacted by two RuvA subunits (via domain III) on 2 adjacent RuvB subunits; this complex drives branch migration. In the full resolvosome a probable DNA-RuvA(4)-RuvB(12)-RuvC(2) complex forms which resolves the HJ.

It localises to the cytoplasm. Its function is as follows. The RuvA-RuvB-RuvC complex processes Holliday junction (HJ) DNA during genetic recombination and DNA repair, while the RuvA-RuvB complex plays an important role in the rescue of blocked DNA replication forks via replication fork reversal (RFR). RuvA specifically binds to HJ cruciform DNA, conferring on it an open structure. The RuvB hexamer acts as an ATP-dependent pump, pulling dsDNA into and through the RuvAB complex. HJ branch migration allows RuvC to scan DNA until it finds its consensus sequence, where it cleaves and resolves the cruciform DNA. This chain is Holliday junction branch migration complex subunit RuvA, found in Staphylococcus carnosus (strain TM300).